The chain runs to 367 residues: Sulfate/thiosulfate import ATP-binding protein CysA 2 (367 aa).

Positions 3-237 constitute an ABC transporter domain; the sequence is VRVQNIRKEF…PVSPFVYGFI (235 aa). ATP is bound at residue 35 to 42; sequence GPSGSGKT.

The protein belongs to the ABC transporter superfamily. Sulfate/tungstate importer (TC 3.A.1.6) family. In terms of assembly, the complex is composed of two ATP-binding proteins (CysA), two transmembrane proteins (CysT and CysW) and a solute-binding protein (CysP).

It localises to the cell inner membrane. The catalysed reaction is sulfate(out) + ATP + H2O = sulfate(in) + ADP + phosphate + H(+). It carries out the reaction thiosulfate(out) + ATP + H2O = thiosulfate(in) + ADP + phosphate + H(+). In terms of biological role, part of the ABC transporter complex CysAWTP involved in sulfate/thiosulfate import. Responsible for energy coupling to the transport system. This is Sulfate/thiosulfate import ATP-binding protein CysA 2 from Rhizobium meliloti (strain 1021) (Ensifer meliloti).